We begin with the raw amino-acid sequence, 91 residues long: YcgL domain-containing protein ETA_15380 (91 aa).

The 85-residue stretch at 1–85 (MFCVIYRSPQ…PLESLLKIHL (85 aa)) folds into the YcgL domain.

In Erwinia tasmaniensis (strain DSM 17950 / CFBP 7177 / CIP 109463 / NCPPB 4357 / Et1/99), this protein is YcgL domain-containing protein ETA_15380.